Reading from the N-terminus, the 426-residue chain is Transcriptional enhancer factor TEF-1 (426 aa).

M1 is subject to N-acetylmethionine. Residues 1–12 show a composition bias toward polar residues; that stretch reads MEPSSWSGSESP. The disordered stretch occupies residues 1-31; the sequence is MEPSSWSGSESPAENMERMSDSADKPIDNDA. Phosphoserine is present on S11. Basic and acidic residues predominate over residues 15–28; it reads NMERMSDSADKPID. A DNA-binding region (TEA) is located at residues 28–104; it reads DNDAEGVWSP…QVLARRKSRD (77 aa). At K108 the chain carries N6-lactoyllysine. The tract at residues 167–426 is transcriptional activation; it reads GSSQDVKPFV…QHHIYRLVKD (260 aa).

In terms of assembly, interacts with YAP1 and WWTR1/TAZ. Post-translationally, lactylation by AARS1 promotes nuclear localization and stabilization of YAP1, leading to increased Hippo signaling pathway. Delactylated by SIRT1. As to expression, preferentially expressed in skeletal muscle. Lower levels in pancreas, placenta, and heart.

It is found in the nucleus. Transcription factor which plays a key role in the Hippo signaling pathway, a pathway involved in organ size control and tumor suppression by restricting proliferation and promoting apoptosis. The core of this pathway is composed of a kinase cascade wherein MST1/MST2, in complex with its regulatory protein SAV1, phosphorylates and activates LATS1/2 in complex with its regulatory protein MOB1, which in turn phosphorylates and inactivates YAP1 oncoprotein and WWTR1/TAZ. Acts by mediating gene expression of YAP1 and WWTR1/TAZ, thereby regulating cell proliferation, migration and epithelial mesenchymal transition (EMT) induction. Binds specifically and cooperatively to the SPH and GT-IIC 'enhansons' (5'-GTGGAATGT-3') and activates transcription in vivo in a cell-specific manner. The activation function appears to be mediated by a limiting cell-specific transcriptional intermediary factor (TIF). Involved in cardiac development. Binds to the M-CAT motif. This Homo sapiens (Human) protein is Transcriptional enhancer factor TEF-1 (TEAD1).